We begin with the raw amino-acid sequence, 88 residues long: Small ribosomal subunit protein bS20 (88 aa).

Belongs to the bacterial ribosomal protein bS20 family.

Its function is as follows. Binds directly to 16S ribosomal RNA. In Clostridioides difficile (strain 630) (Peptoclostridium difficile), this protein is Small ribosomal subunit protein bS20.